Consider the following 145-residue polypeptide: Arginine repressor (145 aa).

It belongs to the ArgR family.

It is found in the cytoplasm. It participates in amino-acid biosynthesis; L-arginine biosynthesis [regulation]. In terms of biological role, regulates arginine biosynthesis genes. The protein is Arginine repressor of Streptococcus mutans serotype c (strain ATCC 700610 / UA159).